The sequence spans 703 residues: Prolyl 3-hydroxylase 2 (703 aa).

Positions M1–G21 are cleaved as a signal peptide. Positions T17–Q40 are disordered. Positions D25–R36 are enriched in basic and acidic residues. TPR repeat units lie at residues F42–L75, R144–H177, H205–E238, and P301–N334. 2 N-linked (GlcNAc...) asparagine glycosylation sites follow: N444 and N544. The Fe2OG dioxygenase domain maps to T552–L666. Fe cation-binding residues include H575, D577, and H647. Residue R657 is part of the active site. Residues K700–L703 carry the Prevents secretion from ER motif.

Belongs to the leprecan family. Fe cation is required as a cofactor. It depends on L-ascorbate as a cofactor. In terms of tissue distribution, detected in kidney. Detected on kidney tubular cells, pancreas acinar cells, Schwann cells of the peripheral nerve in the pinna, and in tunica adventitia, the smooth muscle layer of the aortic wall (at protein level). Detected in lung, skeletal muscle and kidney. Detected in kidney glomeruli and in prehypertrophic regions of long bone from neonates. In the eye, detected in the epithelial layer of the cornea and at lower levels in the sclera at the posterior end of the eye.

It is found in the endoplasmic reticulum. It localises to the sarcoplasmic reticulum. The protein resides in the golgi apparatus. It carries out the reaction L-prolyl-[collagen] + 2-oxoglutarate + O2 = trans-3-hydroxy-L-prolyl-[collagen] + succinate + CO2. Functionally, prolyl 3-hydroxylase that catalyzes the post-translational formation of 3-hydroxyproline on collagens. Contributes to proline 3-hydroxylation of collagen COL4A1 and COL1A1 in tendons, the eye sclera and in the eye lens capsule. Has high activity with the type IV collagen COL4A1, and lower activity with COL1A1. Catalyzes hydroxylation of the first Pro in Gly-Pro-Hyp sequences where Hyp is 4-hydroxyproline. Has no activity on substrates that have proline instead of 4-hydroxyproline in the third position. The chain is Prolyl 3-hydroxylase 2 from Mus musculus (Mouse).